The sequence spans 285 residues: Transmembrane protein 53-A (285 aa).

The chain crosses the membrane as a helical span at residues 165–185; that stretch reads FLALAAFAILVIILRILLYPL.

It belongs to the TMEM53 family.

The protein resides in the nucleus outer membrane. Functionally, ensures normal bone formation, through the negative regulation of bone morphogenetic protein (BMP) signaling in osteoblast lineage cells by blocking cytoplasm-nucleus translocation of phosphorylated SMAD proteins. This is Transmembrane protein 53-A (tmem53-a) from Xenopus laevis (African clawed frog).